The chain runs to 145 residues: Hemoglobin fetal subunit beta (145 aa).

Residues 1–145 form the Globin domain; that stretch reads MLTAEEKASV…VANALAHRYH (145 aa). Positions 62 and 91 each coordinate heme b.

It belongs to the globin family. As to quaternary structure, heterotetramer of two alpha chains and two beta chains.

In Ovis aries (Sheep), this protein is Hemoglobin fetal subunit beta.